We begin with the raw amino-acid sequence, 179 residues long: Large ribosomal subunit protein uL5 (179 aa).

This sequence belongs to the universal ribosomal protein uL5 family. In terms of assembly, part of the 50S ribosomal subunit; part of the 5S rRNA/L5/L18/L25 subcomplex. Contacts the 5S rRNA and the P site tRNA. Forms a bridge to the 30S subunit in the 70S ribosome.

Its function is as follows. This is one of the proteins that bind and probably mediate the attachment of the 5S RNA into the large ribosomal subunit, where it forms part of the central protuberance. In the 70S ribosome it contacts protein S13 of the 30S subunit (bridge B1b), connecting the 2 subunits; this bridge is implicated in subunit movement. Contacts the P site tRNA; the 5S rRNA and some of its associated proteins might help stabilize positioning of ribosome-bound tRNAs. This is Large ribosomal subunit protein uL5 from Prochlorococcus marinus (strain MIT 9301).